The chain runs to 144 residues: 3-dehydroquinate dehydratase (144 aa).

Tyrosine 24 functions as the Proton acceptor in the catalytic mechanism. Substrate is bound by residues asparagine 76, histidine 82, and aspartate 89. Histidine 102 acts as the Proton donor in catalysis. Residues 103-104 and arginine 113 contribute to the substrate site; that span reads LS.

This sequence belongs to the type-II 3-dehydroquinase family. Homododecamer.

The enzyme catalyses 3-dehydroquinate = 3-dehydroshikimate + H2O. The protein operates within metabolic intermediate biosynthesis; chorismate biosynthesis; chorismate from D-erythrose 4-phosphate and phosphoenolpyruvate: step 3/7. Its function is as follows. Catalyzes a trans-dehydration via an enolate intermediate. This chain is 3-dehydroquinate dehydratase, found in Bordetella avium (strain 197N).